The sequence spans 328 residues: Basic leucine zipper (bZIP) transcription factor atfB (328 aa).

The segment at 1-39 is disordered; it reads MLPEQSAFGRSAMPGSDAVNPGPSPFAPPPNSFSGDFLG. Residues 22–31 are compositionally biased toward pro residues; it reads GPSPFAPPPN. The basic motif stretch occupies residues 163–202; it reads KAKREKFLERNRLAASKCRQKKKEHTQLLESRYREQSDKK. Residues 163 to 226 form the bZIP domain; the sequence is KAKREKFLER…LGLKNEVLKH (64 aa). The interval 205 to 219 is leucine-zipper; the sequence is LVSEIARLRSEILGL. A disordered region spans residues 250-313; sequence TTAPDLTDVP…SEASVLTENS (64 aa). A compositionally biased stretch (polar residues) spans 262–277; sequence ASSSEGPMTPRPQQAL. The span at 283 to 305 shows a compositional bias: basic and acidic residues; that stretch reads DPLHLEPSRADGSTDHSVRRDSE.

Belongs to the bZIP family. ATF subfamily.

It is found in the nucleus. Transcription factor that acts as a key player in the regulatory circuit that integrates secondary metabolism and cellular response to oxidative stress. Regulates the genes involved in development, as well as osmotic, oxidative, and cell wall stresses. Participates in the caspofungin paradoxical effect (CPE), where fungi grow beyond the minimum inhibitory concentration of caspofungin. Plays a role in virulence. The sequence is that of Basic leucine zipper (bZIP) transcription factor atfB from Aspergillus fumigatus (strain ATCC MYA-4609 / CBS 101355 / FGSC A1100 / Af293) (Neosartorya fumigata).